The chain runs to 172 residues: Water stress-inducible protein Rab21 (172 aa).

Residues 1–172 (MEHQGQHGHV…KIKEKLPGQH (172 aa)) are disordered. The stretch at 3–28 (HQGQHGHVTSRVDEYGNPVGTGAGHG) is one Type A repeat. Positions 21–65 (VGTGAGHGQMGTAGMGTHGTTGGMGTHGTTGGMGTHGTTGTGGGQ) are enriched in gly residues. A Type B repeat occupies 98–115 (RRKKGIKEKIKEKLPGGN). Residues 124-139 (GGTGGAYGQQGHGTGM) are compositionally biased toward gly residues. A Type A repeat occupies 125–149 (GTGGAYGQQGHGTGMTTGTTGAHGT). Low complexity predominate over residues 140-153 (TTGTTGAHGTTTTD). The span at 154 to 172 (TGEKKGIMDKIKEKLPGQH) shows a compositional bias: basic and acidic residues. The Type B repeat unit spans residues 156-172 (EKKGIMDKIKEKLPGQH).

It belongs to the plant dehydrin family.

The protein resides in the cytoplasm. This chain is Water stress-inducible protein Rab21 (RAB21), found in Oryza sativa subsp. indica (Rice).